The following is a 314-amino-acid chain: Probable tRNA pseudouridine synthase B (314 aa).

Residues 1-10 (MATRGRHRSR) show a composition bias toward basic residues. Positions 1 to 30 (MATRGRHRSRTSGTSSEPMTLRAPPDERDL) are disordered. Catalysis depends on Asp72, which acts as the Nucleophile. The 78-residue stretch at 237–314 (LPRVTIAPSA…LVVELDRMLV (78 aa)) folds into the PUA domain.

This sequence belongs to the pseudouridine synthase TruB family. Type 2 subfamily.

It carries out the reaction uridine(55) in tRNA = pseudouridine(55) in tRNA. Functionally, could be responsible for synthesis of pseudouridine from uracil-55 in the psi GC loop of transfer RNAs. The polypeptide is Probable tRNA pseudouridine synthase B (Haloarcula marismortui (strain ATCC 43049 / DSM 3752 / JCM 8966 / VKM B-1809) (Halobacterium marismortui)).